Consider the following 275-residue polypeptide: NH(3)-dependent NAD(+) synthetase (275 aa).

50–57 (GISGGVDS) is an ATP binding site. Residue Asp56 participates in Mg(2+) binding. Arg147 is a binding site for deamido-NAD(+). Thr167 lines the ATP pocket. Glu172 is a binding site for Mg(2+). Residues Lys180 and Asp187 each coordinate deamido-NAD(+). Residues Lys196 and Thr218 each coordinate ATP. 267–268 (HK) contacts deamido-NAD(+).

This sequence belongs to the NAD synthetase family. In terms of assembly, homodimer.

It catalyses the reaction deamido-NAD(+) + NH4(+) + ATP = AMP + diphosphate + NAD(+) + H(+). Its pathway is cofactor biosynthesis; NAD(+) biosynthesis; NAD(+) from deamido-NAD(+) (ammonia route): step 1/1. Its function is as follows. Catalyzes the ATP-dependent amidation of deamido-NAD to form NAD. Uses ammonia as a nitrogen source. This Pseudomonas syringae pv. syringae (strain B728a) protein is NH(3)-dependent NAD(+) synthetase.